A 469-amino-acid polypeptide reads, in one-letter code: Tubulin gamma-1 chain (469 aa).

A142–G148 contacts GTP.

This sequence belongs to the tubulin family.

The protein resides in the cytoplasm. Its subcellular location is the cytoskeleton. It is found in the microtubule organizing center. Its function is as follows. Tubulin is the major constituent of microtubules. The gamma chain is found at microtubule organizing centers (MTOC) such as the spindle poles, suggesting that it is involved in the minus-end nucleation of microtubule assembly. This chain is Tubulin gamma-1 chain (TUBG1), found in Zea mays (Maize).